Here is a 293-residue protein sequence, read N- to C-terminus: Pyridoxal 5'-phosphate synthase subunit PdxS (293 aa).

D-ribose 5-phosphate is bound at residue Asp-23. Lys-80 acts as the Schiff-base intermediate with D-ribose 5-phosphate in catalysis. A D-ribose 5-phosphate-binding site is contributed by Gly-152. A D-glyceraldehyde 3-phosphate-binding site is contributed by Arg-164. D-ribose 5-phosphate is bound by residues Gly-213 and 234–235 (GS).

It belongs to the PdxS/SNZ family. In terms of assembly, in the presence of PdxT, forms a dodecamer of heterodimers.

It catalyses the reaction aldehydo-D-ribose 5-phosphate + D-glyceraldehyde 3-phosphate + L-glutamine = pyridoxal 5'-phosphate + L-glutamate + phosphate + 3 H2O + H(+). It functions in the pathway cofactor biosynthesis; pyridoxal 5'-phosphate biosynthesis. Catalyzes the formation of pyridoxal 5'-phosphate from ribose 5-phosphate (RBP), glyceraldehyde 3-phosphate (G3P) and ammonia. The ammonia is provided by the PdxT subunit. Can also use ribulose 5-phosphate and dihydroxyacetone phosphate as substrates, resulting from enzyme-catalyzed isomerization of RBP and G3P, respectively. This chain is Pyridoxal 5'-phosphate synthase subunit PdxS, found in Dehalococcoides mccartyi (strain ATCC BAA-2266 / KCTC 15142 / 195) (Dehalococcoides ethenogenes (strain 195)).